Consider the following 1634-residue polypeptide: Phosphatidylinositol 4-phosphate 3-kinase C2 domain-containing subunit beta (1634 aa).

An interaction with GRB2 region spans residues 2-298; the sequence is SSTQGNGEHW…YASRYGNRKN (297 aa). Disordered stretches follow at residues 45–188 and 259–315; these read EENR…QPSD and GRGP…VGSR. The segment covering 87 to 112 has biased composition (polar residues); sequence SDPTLNYNSLSPQEGPPNHSTSQGPQ. The segment covering 176–187 has biased composition (low complexity); the sequence is GSPSSSKISQPS. Positions 259-270 are enriched in basic and acidic residues; the sequence is GRGPLDFSKDTS. In terms of domain architecture, PI3K-RBD spans 375 to 463; it reads EVNLKVTVLC…DIDIRLQLME (89 aa). A C2 PI3K-type domain is found at 635–786; the sequence is VYATHRIPII…DSVILQIDFP (152 aa). Positions 805-981 constitute a PIK helical domain; it reads RYEFGSLREE…QYLLAALLCC (177 aa). The region spanning 1050–1328 is the PI3K/PI4K catalytic domain; that stretch reads VPRDCSYFNS…LIESSLGSVA (279 aa). The segment at 1056-1062 is G-loop; sequence YFNSNAV. The segment at 1192 to 1200 is catalytic loop; that stretch reads GICDRHNDN. An activation loop region spans residues 1211–1237; sequence HIDFGRFLGHAQMFGNIKRDRAPFVFT. The region spanning 1365 to 1481 is the PX domain; that stretch reads GRISDVFLCR…TFFHPLPRDE (117 aa). The 121-residue stretch at 1504–1624 folds into the C2 domain; that stretch reads VGGEVKLSIS…DLAQEKTGWF (121 aa).

It belongs to the PI3/PI4-kinase family. Part of a complex with ERBB2 and EGFR. Part of a complex with phosphorylated EGFR and GRB2. Interacts with phosphorylated EGFR and PDGFR, maybe indirectly. Interacts with GRB2. Ca(2+) is required as a cofactor. The cofactor is Mg(2+). Requires Mn(2+) as cofactor. As to expression, expressed in columnar and transitional epithelia, mononuclear cells, and ganglion cells (at protein level). Widely expressed, with highest levels in thymus and placenta and lowest in peripheral blood, skeletal muscle and kidney.

It is found in the microsome. It localises to the cell membrane. The protein resides in the cytoplasm. Its subcellular location is the cytosol. The protein localises to the nucleus. It is found in the endoplasmic reticulum. The enzyme catalyses a 1,2-diacyl-sn-glycero-3-phospho-(1D-myo-inositol 4-phosphate) + ATP = a 1,2-diacyl-sn-glycero-3-phospho-(1D-myo-inositol-3,4-bisphosphate) + ADP + H(+). It carries out the reaction a 1,2-diacyl-sn-glycero-3-phospho-(1D-myo-inositol) + ATP = a 1,2-diacyl-sn-glycero-3-phospho-(1D-myo-inositol-3-phosphate) + ADP + H(+). With respect to regulation, activated by GRB2. Its function is as follows. Phosphorylates PtdIns and PtdIns4P with a preference for PtdIns. Does not phosphorylate PtdIns(4,5)P2. May be involved in EGF and PDGF signaling cascades. This Homo sapiens (Human) protein is Phosphatidylinositol 4-phosphate 3-kinase C2 domain-containing subunit beta (PIK3C2B).